The chain runs to 142 residues: Large ribosomal subunit protein uL11 (142 aa).

Belongs to the universal ribosomal protein uL11 family. As to quaternary structure, part of the ribosomal stalk of the 50S ribosomal subunit. Interacts with L10 and the large rRNA to form the base of the stalk. L10 forms an elongated spine to which L12 dimers bind in a sequential fashion forming a multimeric L10(L12)X complex. Post-translationally, one or more lysine residues are methylated.

Functionally, forms part of the ribosomal stalk which helps the ribosome interact with GTP-bound translation factors. In Vibrio cholerae serotype O1 (strain ATCC 39541 / Classical Ogawa 395 / O395), this protein is Large ribosomal subunit protein uL11.